Here is a 477-residue protein sequence, read N- to C-terminus: D-alanyl-D-alanine carboxypeptidase DacB (477 aa).

Positions 1–20 (MRFSRFIIGLTSCIAFSVQA) are cleaved as a signal peptide. S62 functions as the Acyl-ester intermediate in the catalytic mechanism. K65 serves as the catalytic Proton acceptor. An absent in class-A beta-lactamases region spans residues 90–263 (GNVENGVLKG…YAGAILKDEL (174 aa)). S306 is an active-site residue. K417 serves as a coordination point for substrate.

Belongs to the peptidase S13 family.

The protein resides in the periplasm. The enzyme catalyses Preferential cleavage: (Ac)2-L-Lys-D-Ala-|-D-Ala. Also transpeptidation of peptidyl-alanyl moieties that are N-acyl substituents of D-alanine.. It participates in cell wall biogenesis; peptidoglycan biosynthesis. Functionally, not involved in transpeptidation but exclusively catalyzes a DD-carboxypeptidase and DD-endopeptidase reaction. The sequence is that of D-alanyl-D-alanine carboxypeptidase DacB (dacB) from Escherichia coli (strain K12).